Consider the following 244-residue polypeptide: MEKVNFFEEVEKTLNISFNDKELIDTALTHSSYANGKKGVKFNERMEFLGDSVLQLCISEYLFLIYKSKSEGELTKKRSLIVCENSLYEVAKKWNIGKYIKMSKGEEITGGRERTSILANCVEAIIAAIYIDSGYKKTKQFIIDNFKDIIEKAIKNQIVLDYKTNLQEIVQQDGDIHIEYMLIKYEGPPHRRKFYTKVCVANNVMGSGVGYTKKESEQNAAQDALKKLKSEDKWNKEGIDTNEK.

Positions 7–134 (FEEVEKTLNI…IIAAIYIDSG (128 aa)) constitute an RNase III domain. Residue E47 coordinates Mg(2+). The active site involves D51. 2 residues coordinate Mg(2+): N120 and E123. E123 is a catalytic residue. In terms of domain architecture, DRBM spans 161–230 (DYKTNLQEIV…AQDALKKLKS (70 aa)).

This sequence belongs to the ribonuclease III family. As to quaternary structure, homodimer. Mg(2+) serves as cofactor.

The protein localises to the cytoplasm. The enzyme catalyses Endonucleolytic cleavage to 5'-phosphomonoester.. Its function is as follows. Digests double-stranded RNA. Involved in the processing of primary rRNA transcript to yield the immediate precursors to the large and small rRNAs (23S and 16S). Processes some mRNAs, and tRNAs when they are encoded in the rRNA operon. Processes pre-crRNA and tracrRNA of type II CRISPR loci if present in the organism. The polypeptide is Ribonuclease 3 (Clostridium kluyveri (strain NBRC 12016)).